A 366-amino-acid chain; its full sequence is Probable protein arginine N-methyltransferase 1.2 (366 aa).

In terms of domain architecture, SAM-dependent MTase PRMT-type spans 45–347 (ADYYFDSYSH…NPRDVDIKLS (303 aa)). Catalysis depends on residues Glu-157 and Glu-166.

Belongs to the class I-like SAM-binding methyltransferase superfamily. Protein arginine N-methyltransferase family. Interacts with FIB2 and PRMT11.

The protein resides in the nucleus. It localises to the cytoplasm. In terms of biological role, methylates (mono and asymmetric dimethylation) the guanidino nitrogens of arginyl residues present in a glycine and arginine-rich domain. Type I arginine methyltransferase active on both histones and non-histone proteins. Mediates the methylation of MED36A. The protein is Probable protein arginine N-methyltransferase 1.2 (PRMT12) of Arabidopsis thaliana (Mouse-ear cress).